A 334-amino-acid polypeptide reads, in one-letter code: MERCSVAQQFEDKFHRKFYYLRLSVTDVCNFKCTYCLPDGYKPSGNKNSSFLSLPEIKRVVKAFADCGTSKVRITGGEPSLRKDFTDIIHSVATTPGIKKVATTTNGYRMAKQVADWREAGLTNINVSVDSLDPRMFHQITGENKFTEVMNGIERAFEVGYEQVKVNVVLMKDLNHHELPAFLNWIKDRPIQLRFIELMQTGEMDDLFSKHHVSGVAIRNQLIANGWLLKVRSHHDGPAQVFVHPDYKGEIGLIMPYEKDFCESCNRLRVSALGKLHLCLFGEHGVELRDLLERDDQENELIERIQSQLQTKSVSHFLHDGNTGMTPHLASIGG.

Residues 13 to 239 (KFHRKFYYLR…KVRSHHDGPA (227 aa)) form the Radical SAM core domain. Arginine 22 contacts GTP. [4Fe-4S] cluster is bound by residues cysteine 29 and cysteine 33. Tyrosine 35 provides a ligand contact to S-adenosyl-L-methionine. Residue cysteine 36 participates in [4Fe-4S] cluster binding. Arginine 73 contributes to the GTP binding site. Position 77 (glycine 77) interacts with S-adenosyl-L-methionine. Position 104 (threonine 104) interacts with GTP. Serine 128 lines the S-adenosyl-L-methionine pocket. Residue lysine 165 coordinates GTP. Position 199 (methionine 199) interacts with S-adenosyl-L-methionine. Cysteine 262 and cysteine 265 together coordinate [4Fe-4S] cluster. 267-269 (RLR) is a binding site for GTP. A [4Fe-4S] cluster-binding site is contributed by cysteine 279.

This sequence belongs to the radical SAM superfamily. MoaA family. Monomer and homodimer. It depends on [4Fe-4S] cluster as a cofactor.

It catalyses the reaction GTP + AH2 + S-adenosyl-L-methionine = (8S)-3',8-cyclo-7,8-dihydroguanosine 5'-triphosphate + 5'-deoxyadenosine + L-methionine + A + H(+). The protein operates within cofactor biosynthesis; molybdopterin biosynthesis. Catalyzes the cyclization of GTP to (8S)-3',8-cyclo-7,8-dihydroguanosine 5'-triphosphate. The chain is GTP 3',8-cyclase from Vibrio parahaemolyticus serotype O3:K6 (strain RIMD 2210633).